The following is a 179-amino-acid chain: Ribosome-recycling factor (179 aa).

Belongs to the RRF family.

It localises to the cytoplasm. In terms of biological role, responsible for the release of ribosomes from messenger RNA at the termination of protein biosynthesis. May increase the efficiency of translation by recycling ribosomes from one round of translation to another. The polypeptide is Ribosome-recycling factor (Chlamydia trachomatis serovar A (strain ATCC VR-571B / DSM 19440 / HAR-13)).